We begin with the raw amino-acid sequence, 305 residues long: Aquaporin NIP6-1 (305 aa).

Positions 1–30 are disordered; the sequence is MDHEEIPSTPSTPATTPGTPGAPLFGGFEG. The span at 7-23 shows a compositional bias: low complexity; sequence PSTPSTPATTPGTPGAP. A run of 2 helical transmembrane segments spans residues 82–102 and 111–131; these read LGAEFVGTLILIFAGTATAIV and TLIGCAASAGLAVMIVILSTG. The short motif at 139–141 is the NPA 1 element; sequence NPA. 3 consecutive transmembrane segments (helical) span residues 159–179, 194–214, and 221–241; these read VYIGAQVMASVSAAFALKAVF, LSQAFALEFIISFNLMFVVTA, and AVGELAGIAVGATVMLNILIA. An NPA 2 motif is present at residues 250–252; the sequence is NPV. A helical membrane pass occupies residues 267 to 287; it reads IWVYLTAPILGALIGAGTYTI. Ser-302 carries the phosphoserine modification.

The protein belongs to the MIP/aquaporin (TC 1.A.8) family. NIP (TC 1.A.8.12) subfamily. Expressed in roots.

Its subcellular location is the membrane. Transports glycerol, urea and formamide, in Xenopus laevis oocytes. Very low water transport activity. The polypeptide is Aquaporin NIP6-1 (NIP6-1) (Arabidopsis thaliana (Mouse-ear cress)).